A 286-amino-acid chain; its full sequence is Sulfate transport system permease protein CysT (286 aa).

Helical transmembrane passes span 27–47 (WVVT…ALLV), 74–94 (FITA…VAWV), 108–128 (AMVD…LATL), 146–166 (IAFS…PFIV), 195–215 (FWRV…ALGF), 224–244 (SVVL…VLVF), and 257–276 (VIGA…INLL). The 204-residue stretch at 70–273 (YNVTFITALA…SVSLILLLII (204 aa)) folds into the ABC transmembrane type-1 domain.

This sequence belongs to the binding-protein-dependent transport system permease family. CysTW subfamily. The complex is composed of two ATP-binding proteins (CysA), two transmembrane proteins (CysT and CysW) and a solute-binding protein (CysP).

The protein localises to the cell inner membrane. Functionally, part of the ABC transporter complex CysAWTP (TC 3.A.1.6.1) involved in sulfate/thiosulfate import. Probably responsible for the translocation of the substrate across the membrane. This Synechocystis sp. (strain ATCC 27184 / PCC 6803 / Kazusa) protein is Sulfate transport system permease protein CysT (cysT).